We begin with the raw amino-acid sequence, 284 residues long: BES1/BZR1 homolog protein 3 (284 aa).

Disordered regions lie at residues 1–21 (MTSGTRTPTWKERENNKRRER) and 85–116 (GSTSASPCSSYQHSPRASYNPSPSSSSFPSPT). Residues 6 to 88 (RTPTWKEREN…RMDLMNGSTS (83 aa)) form a required for DNA-binding region. Polar residues predominate over residues 85 to 97 (GSTSASPCSSYQH). A compositionally biased stretch (low complexity) spans 98–114 (SPRASYNPSPSSSSFPS). T153 carries the phosphothreonine modification.

The protein belongs to the BZR/LAT61 family. Post-translationally, phosphorylated. Phosphorylation increases protein degradation.

The polypeptide is BES1/BZR1 homolog protein 3 (BEH3) (Arabidopsis thaliana (Mouse-ear cress)).